Here is a 419-residue protein sequence, read N- to C-terminus: MASAFSKLLTGRNASLLFTTLGTSALTTGYLLNRQKVSADAREQHKLFPPSADYPDLRKHNNCMAECLTPTIYAKLRNKMTPSGYTLDQCIQTGVDNPGHPFIKTVGMVAGDEESYEVFADLFDPVIKLRHNGYDPRVMKHPTDLDASKITHGQFDERYVLSSRVRTGRSIRGLSLPPACSRAERREVENVAITALEGLKGDLAGRYYKLSEMTEQDQQRLIDDHFLFDKPVSPLLTCAGMARDWPDARGIWHNYDKTFLIWINEEDHTRVISMEKGGNMKRVFERFCRGLKEVERLIQERGWEFMWNERLGYILTCPSNLGTGLRAGVHVRIPKLSKDPRFSKILENLRLQKRGTGGVDTAAVADVYDISNIDRIGRSEVELVQIVIDGVNYLVDCEKKLERGQDIKVPPPLPQFGRK.

Residues 1-39 constitute a mitochondrion transit peptide; sequence MASAFSKLLTGRNASLLFTTLGTSALTTGYLLNRQKVSA. A cardiolipin-binding region spans residues 40–64; it reads DAREQHKLFPPSADYPDLRKHNNCM. The 87-residue stretch at 46–132 folds into the Phosphagen kinase N-terminal domain; it reads KLFPPSADYP…FDPVIKLRHN (87 aa). The region spanning 159–401 is the Phosphagen kinase C-terminal domain; that stretch reads YVLSSRVRTG…NYLVDCEKKL (243 aa). Residues 162–166 and histidine 225 each bind ATP; that span reads SSRVR. A Phosphotyrosine modification is found at tyrosine 255. ATP is bound by residues arginine 270, arginine 326, 354-359, and aspartate 369; that span reads RGTGGV. The residue at position 356 (threonine 356) is a Phosphothreonine.

This sequence belongs to the ATP:guanido phosphotransferase family. In terms of assembly, exists as an octamer composed of four CKMT2 homodimers.

It is found in the mitochondrion inner membrane. The catalysed reaction is creatine + ATP = N-phosphocreatine + ADP + H(+). Its function is as follows. Reversibly catalyzes the transfer of phosphate between ATP and various phosphogens (e.g. creatine phosphate). Creatine kinase isoenzymes play a central role in energy transduction in tissues with large, fluctuating energy demands, such as skeletal muscle, heart, brain and spermatozoa. The sequence is that of Creatine kinase S-type, mitochondrial (Ckmt2) from Mus musculus (Mouse).